Consider the following 218-residue polypeptide: Eukaryotic translation initiation factor 3 subunit K (218 aa).

Positions 44 to 205 (YDWGANLAVL…NIKTKNITEK (162 aa)) constitute a PCI domain.

It belongs to the eIF-3 subunit K family. Component of the eukaryotic translation initiation factor 3 (eIF-3) complex.

Its subcellular location is the cytoplasm. Functionally, component of the eukaryotic translation initiation factor 3 (eIF-3) complex, which is involved in protein synthesis of a specialized repertoire of mRNAs and, together with other initiation factors, stimulates binding of mRNA and methionyl-tRNAi to the 40S ribosome. The eIF-3 complex specifically targets and initiates translation of a subset of mRNAs involved in cell proliferation. The protein is Eukaryotic translation initiation factor 3 subunit K of Bombyx mori (Silk moth).